A 320-amino-acid polypeptide reads, in one-letter code: Mycothiol acetyltransferase (320 aa).

N-acetyltransferase domains follow at residues 16–141 (RQVR…RSLR) and 152–320 (LQIR…AALA). Glu36 contacts 1D-myo-inositol 2-(L-cysteinylamino)-2-deoxy-alpha-D-glucopyranoside. Acetyl-CoA contacts are provided by residues 80 to 82 (LVV) and 88 to 93 (RRGIAT). Glu179, Lys229, and Glu239 together coordinate 1D-myo-inositol 2-(L-cysteinylamino)-2-deoxy-alpha-D-glucopyranoside. Acetyl-CoA contacts are provided by residues 243 to 245 (LGV) and 250 to 256 (QGRGLGR). Tyr284 is a binding site for 1D-myo-inositol 2-(L-cysteinylamino)-2-deoxy-alpha-D-glucopyranoside. 289-294 (NIAAVR) is an acetyl-CoA binding site.

Belongs to the acetyltransferase family. MshD subfamily. In terms of assembly, monomer.

The catalysed reaction is 1D-myo-inositol 2-(L-cysteinylamino)-2-deoxy-alpha-D-glucopyranoside + acetyl-CoA = mycothiol + CoA + H(+). Catalyzes the transfer of acetyl from acetyl-CoA to desacetylmycothiol (Cys-GlcN-Ins) to form mycothiol. This Mycobacterium marinum (strain ATCC BAA-535 / M) protein is Mycothiol acetyltransferase.